A 593-amino-acid polypeptide reads, in one-letter code: Glucose-6-phosphate 1-dehydrogenase, chloroplastic (593 aa).

NADP(+) is bound by residues 116-123 (GASGDLAK) and arginine 150. A disulfide bond links cysteine 168 and cysteine 176. Lysine 253 serves as a coordination point for NADP(+). D-glucose 6-phosphate is bound by residues lysine 253, 283-287 (HYLGK), glutamate 321, and aspartate 340. The active-site Proton acceptor is the histidine 345. Lysine 438 is an NADP(+) binding site. D-glucose 6-phosphate-binding residues include lysine 441 and arginine 446. Arginine 451 and arginine 480 together coordinate NADP(+). D-glucose 6-phosphate is bound at residue glutamine 482. NADP(+) is bound by residues 488-490 (YLK) and arginine 573.

It belongs to the glucose-6-phosphate dehydrogenase family. Homodimer.

The protein resides in the plastid. The protein localises to the chloroplast. It carries out the reaction D-glucose 6-phosphate + NADP(+) = 6-phospho-D-glucono-1,5-lactone + NADPH + H(+). The protein operates within carbohydrate degradation; pentose phosphate pathway; D-ribulose 5-phosphate from D-glucose 6-phosphate (oxidative stage): step 1/3. Regulated by metabolites. Post-translationally inactivated by cysteine-mediated redox modification via the ferredoxin-thioredoxin system in the light and this avoids futile cycles with photosynthetic CO2 fixation. Catalyzes the rate-limiting step of the oxidative pentose-phosphate pathway, which represents a route for the dissimilation of carbohydrates besides glycolysis. The main function of this enzyme is to provide reducing power (NADPH) and pentose phosphates for fatty acid and nucleic acid synthesis which are involved in membrane synthesis and cell division. The polypeptide is Glucose-6-phosphate 1-dehydrogenase, chloroplastic (Nicotiana tabacum (Common tobacco)).